The chain runs to 106 residues: Large ribosomal subunit protein uL24 (106 aa).

It belongs to the universal ribosomal protein uL24 family. Part of the 50S ribosomal subunit.

In terms of biological role, one of two assembly initiator proteins, it binds directly to the 5'-end of the 23S rRNA, where it nucleates assembly of the 50S subunit. Its function is as follows. One of the proteins that surrounds the polypeptide exit tunnel on the outside of the subunit. The chain is Large ribosomal subunit protein uL24 from Desulforamulus reducens (strain ATCC BAA-1160 / DSM 100696 / MI-1) (Desulfotomaculum reducens).